We begin with the raw amino-acid sequence, 64 residues long: Conotoxin VnMLCL-042 (64 aa).

The first 19 residues, 1–19 (MLCLPVFIILLLLASPAAP), serve as a signal peptide directing secretion. Positions 20-43 (NPLQTRIQSNLIRAGPEDANMKTD) are excised as a propeptide. Residue M63 is modified to Methionine amide.

The protein belongs to the conotoxin T superfamily. Expressed by the venom duct.

The protein resides in the secreted. This is Conotoxin VnMLCL-042 from Conus ventricosus (Mediterranean cone).